The primary structure comprises 477 residues: Glutamate--tRNA ligase 2 (477 aa).

The 'HIGH' region signature appears at 9–19 (PSPTGFLHIGG). The short motif at 238–242 (KLSKR) is the 'KMSKS' region element. Residue K241 participates in ATP binding.

This sequence belongs to the class-I aminoacyl-tRNA synthetase family. Glutamate--tRNA ligase type 1 subfamily. As to quaternary structure, monomer.

It is found in the cytoplasm. The enzyme catalyses tRNA(Glu) + L-glutamate + ATP = L-glutamyl-tRNA(Glu) + AMP + diphosphate. Its function is as follows. Catalyzes the attachment of glutamate to tRNA(Glu) in a two-step reaction: glutamate is first activated by ATP to form Glu-AMP and then transferred to the acceptor end of tRNA(Glu). The protein is Glutamate--tRNA ligase 2 of Paramagnetospirillum magneticum (strain ATCC 700264 / AMB-1) (Magnetospirillum magneticum).